Reading from the N-terminus, the 335-residue chain is Leucine-rich repeat-containing protein 39 (335 aa).

Residues 10 to 47 (AVNAVKEVWEKRIKKLNEDLKREKEFQHKLVRIWEERV) are a coiled coil. LRR repeat units lie at residues 84–105 (QLQE…IGRF), 107–128 (NLIV…IGLL), 130–151 (RLQE…LSNC), 153–176 (SLEK…SNLL), 177–197 (KLTH…AVLN), 200–221 (ALEW…IERM), 223–244 (NLHT…ISNM), 246–267 (NLGT…MEEM), and 269–290 (NLRF…PPSE).

Interacts with MYH7 (via C-terminus). Highly expressed in skeletal muscle and heart. Not detected in other tissues tested.

It localises to the cytoplasm. The protein resides in the myofibril. It is found in the sarcomere. The protein localises to the m line. Its function is as follows. Component of the sarcomeric M-band which plays a role in myocyte response to biomechanical stress. May regulate expression of other M-band proteins via an SRF-dependent pathway. Important for normal contractile function in heart. This Homo sapiens (Human) protein is Leucine-rich repeat-containing protein 39 (LRRC39).